We begin with the raw amino-acid sequence, 462 residues long: Cysteine--tRNA ligase (462 aa).

Residue Cys28 coordinates Zn(2+). The short motif at 30-40 is the 'HIGH' region element; it reads MTVYDYCHLGH. Zn(2+) contacts are provided by Cys209, His234, and Glu238. The 'KMSKS' region signature appears at 266 to 270; that stretch reads KMAKS. ATP is bound at residue Lys269.

This sequence belongs to the class-I aminoacyl-tRNA synthetase family. Monomer. Requires Zn(2+) as cofactor.

The protein resides in the cytoplasm. The catalysed reaction is tRNA(Cys) + L-cysteine + ATP = L-cysteinyl-tRNA(Cys) + AMP + diphosphate. The protein is Cysteine--tRNA ligase of Alkalilimnicola ehrlichii (strain ATCC BAA-1101 / DSM 17681 / MLHE-1).